Consider the following 162-residue polypeptide: NADH-quinone oxidoreductase subunit I (162 aa).

4Fe-4S ferredoxin-type domains lie at 53 to 83 (LRRY…IEPE) and 93 to 122 (RRYD…EGPN). Residues Cys-63, Cys-66, Cys-69, Cys-73, Cys-102, Cys-105, Cys-108, and Cys-112 each contribute to the [4Fe-4S] cluster site.

Belongs to the complex I 23 kDa subunit family. NDH-1 is composed of 14 different subunits. Subunits NuoA, H, J, K, L, M, N constitute the membrane sector of the complex. The cofactor is [4Fe-4S] cluster.

The protein resides in the cell inner membrane. It carries out the reaction a quinone + NADH + 5 H(+)(in) = a quinol + NAD(+) + 4 H(+)(out). In terms of biological role, NDH-1 shuttles electrons from NADH, via FMN and iron-sulfur (Fe-S) centers, to quinones in the respiratory chain. The immediate electron acceptor for the enzyme in this species is believed to be ubiquinone. Couples the redox reaction to proton translocation (for every two electrons transferred, four hydrogen ions are translocated across the cytoplasmic membrane), and thus conserves the redox energy in a proton gradient. The sequence is that of NADH-quinone oxidoreductase subunit I from Paramagnetospirillum magneticum (strain ATCC 700264 / AMB-1) (Magnetospirillum magneticum).